The chain runs to 147 residues: Hemoglobin subunit beta-1 (147 aa).

Position 2 is an N-acetylvaline (Val2). Positions 3 to 147 (HLTDAEKAAV…VATALAHKYH (145 aa)) constitute a Globin domain. At Lys18 the chain carries N6-succinyllysine. 3 positions are modified to phosphoserine: Ser21, Ser45, and Ser51. N6-succinyllysine is present on Lys60. 2 residues coordinate heme b: His64 and His93. Residue Arg105 is modified to Asymmetric dimethylarginine. The residue at position 124 (Thr124) is a Phosphothreonine.

It belongs to the globin family. Heterotetramer of two alpha chains and two beta chains. As to expression, red blood cells.

In terms of biological role, involved in oxygen transport from the lung to the various peripheral tissues. This Mus musculus (Mouse) protein is Hemoglobin subunit beta-1 (Hbb-b1).